Here is a 418-residue protein sequence, read N- to C-terminus: Ankyrin repeat and SOCS box protein 6 (418 aa).

6 ANK repeats span residues 65–95 (EGVSNALLKMAELGLTRAAAVLLQSGANLNF), 100–129 (TYYTALHIAVLRNQPDMVELLVRHGADINR), 134–164 (HESSPLDLASEEPERLPCLQRLLDLGADVNA), 168–203 (NGKTALLHALASSDGVQIHNTENIRLLLEGGADVKA), 224–253 (CGDKEEAPMINRFCFQVTQLLLAHGADPSE), and 258–287 (ESLTHICLKSFKLHFPLLCFLLESGAAYNC). Residues 358 to 413 (ALHASLRQLESYPPPLKHLCRVSIRLCLRPWPVDTKVKALPLPDRLKWYLLSAHSD) form the SOCS box domain.

It belongs to the ankyrin SOCS box (ASB) family. Binds APS. Identified in a complex with ELOB and ELOC. Interacts with CUL5 and RNF7. Interacts with SQSTM1. As to expression, detected in adipocytes.

The protein resides in the cytoplasm. The protein operates within protein modification; protein ubiquitination. Its function is as follows. Probable substrate-recognition component of a SCF-like ECS (Elongin-Cullin-SOCS-box protein) E3 ubiquitin-protein ligase complex which mediates the ubiquitination and subsequent proteasomal degradation of target proteins. May play a role in the regulation of cell proliferation and autophagy by promoting the ubiquitination and degradation of SQSTM1. This chain is Ankyrin repeat and SOCS box protein 6 (Asb6), found in Mus musculus (Mouse).